The primary structure comprises 89 residues: Small ribosomal subunit protein uS15 (89 aa).

It belongs to the universal ribosomal protein uS15 family. In terms of assembly, part of the 30S ribosomal subunit. Forms a bridge to the 50S subunit in the 70S ribosome, contacting the 23S rRNA.

Functionally, one of the primary rRNA binding proteins, it binds directly to 16S rRNA where it helps nucleate assembly of the platform of the 30S subunit by binding and bridging several RNA helices of the 16S rRNA. Its function is as follows. Forms an intersubunit bridge (bridge B4) with the 23S rRNA of the 50S subunit in the ribosome. The protein is Small ribosomal subunit protein uS15 of Bifidobacterium animalis subsp. lactis (strain AD011).